Here is a 515-residue protein sequence, read N- to C-terminus: Methionine--tRNA ligase (515 aa).

The short motif at 13 to 23 (AYPNGKPHIGH) is the 'HIGH' region element. Residues 300–304 (KMSKS) carry the 'KMSKS' region motif. Lys-303 contributes to the ATP binding site.

Belongs to the class-I aminoacyl-tRNA synthetase family. MetG type 2B subfamily. Monomer.

The protein resides in the cytoplasm. It catalyses the reaction tRNA(Met) + L-methionine + ATP = L-methionyl-tRNA(Met) + AMP + diphosphate. Is required not only for elongation of protein synthesis but also for the initiation of all mRNA translation through initiator tRNA(fMet) aminoacylation. The polypeptide is Methionine--tRNA ligase (Brucella melitensis biotype 1 (strain ATCC 23456 / CCUG 17765 / NCTC 10094 / 16M)).